Reading from the N-terminus, the 504-residue chain is Pentatricopeptide repeat-containing protein At1g05600 (504 aa).

PPR repeat units follow at residues 45–79 (NGSVYATMIDILGKSNRVLEMKYVIERMKEDSCEC), 80–114 (KDSVFASVIRTFSRAGRLEDAISLFKSLHEFNCVN), 115–145 (WSLSFDTLLQEMVKESELEAACHIFRKYCYG), 151–185 (RITALNLLMKVLCQVNRSDLASQVFQEMNYQGCYP), 186–216 (DRDSYRILMKGFCLEGKLEEATHLLYSMFWR), 225–259 (DIVVYRILLDALCDAGEVDDAIEILGKILRKGLKA), 260–296 (PKRCYHHIEAGHWESSSEGIERVKRLLTETLIRGAIP), 297–331 (CLDSYSAMATDLFEEGKLVEGEEVLLAMRSKGFEP), 332–367 (TPFIYGAKVKALCRAGKLKEAVSVINKEMMQGHCLP), 368–398 (TVGVYNVLIKGLCDDGKSMEAVGYLKKMSKQ), 404–438 (NEETYQTLVDGLCRDGQFLEASQVMEEMLIKSHFP), and 439–473 (GVETYHMMIKGLCDMDRRYEAVMWLEEMVSQDMVP).

This sequence belongs to the PPR family. P subfamily.

The protein is Pentatricopeptide repeat-containing protein At1g05600 of Arabidopsis thaliana (Mouse-ear cress).